Here is a 1321-residue protein sequence, read N- to C-terminus: Multidrug resistance protein pgp-1 (1321 aa).

Over 1–77 (MLRNGSLRQS…YTTTLEKLLL (77 aa)) the chain is Cytoplasmic. The region spanning 77–381 (LFIGTLVAVI…AGPQLAVLGT (305 aa)) is the ABC transmembrane type-1 1 domain. The helical transmembrane segment at 78-98 (FIGTLVAVITGAGLPLMSILQ) threads the bilayer. Asn115 and Asn125 each carry an N-linked (GlcNAc...) asparagine glycan. Residues 144 to 164 (AMTVGMWAAGQITVTCYLYVA) form a helical membrane-spanning segment. An N-linked (GlcNAc...) asparagine glycan is attached at Asn190. 4 helical membrane passes run 213–233 (KIGM…VAFT), 240–260 (LVML…AKSM), 321–341 (ISFG…FYIG), and 350–370 (LNFG…MALG). Residues 371–753 (LAGPQLAVLG…LYHARPHALS (383 aa)) are Cytoplasmic-facing. The 237-residue stretch at 416-652 (ITVENVHFTY…QGLYYDLVTA (237 aa)) folds into the ABC transporter 1 domain. Residue 451–458 (GSSGCGKS) participates in ATP binding. A run of 2 helical transmembrane segments spans residues 754–774 (LFIG…YSVF) and 798–818 (LMFL…TFFM). In terms of domain architecture, ABC transmembrane type-1 2 spans 754 to 1043 (LFIGMSTATI…ATSYFPEYAK (290 aa)). N-linked (GlcNAc...) asparagine glycosylation is present at Asn850. 4 consecutive transmembrane segments (helical) span residues 874–894 (FSTV…AFFY), 895–915 (GWQM…GQYL), 978–998 (IQGL…TCAY), and 1017–1037 (VLRV…ATSY). Over 1038–1321 (FPEYAKATFA…LTQKQMTEKK (284 aa)) the chain is Cytoplasmic. Residues 1077 to 1315 (VIFKNVRFAY…KGAYYKLTQK (239 aa)) form the ABC transporter 2 domain. 1112-1119 (GPSGCGKS) provides a ligand contact to ATP.

This sequence belongs to the ABC transporter superfamily. ABCB family. Multidrug resistance exporter (TC 3.A.1.201) subfamily. In terms of tissue distribution, intestinal cells.

The protein resides in the membrane. The enzyme catalyses ATP + H2O + xenobioticSide 1 = ADP + phosphate + xenobioticSide 2.. Functionally, energy-dependent efflux pump responsible for decreased drug accumulation in multidrug-resistant cells. This chain is Multidrug resistance protein pgp-1 (pgp-1), found in Caenorhabditis elegans.